The sequence spans 779 residues: Endoribonuclease YSH1 (779 aa).

Residues His68, His70, Asp72, His73, His163, and Asp184 each coordinate Zn(2+). Residue His408 is the Proton donor of the active site. Zn(2+) is bound at residue His430. Position 517 is a phosphoserine; by ATM or ATR (Ser517).

It belongs to the metallo-beta-lactamase superfamily. RNA-metabolizing metallo-beta-lactamase-like family. CPSF2/YSH1 subfamily. As to quaternary structure, component of the cleavage and polyadenylation factor (CPF) complex, which is composed of at least PTI1, SYC1, SSU72, GLC7, MPE1, REF2, PFS2, PTA1, YSH1/BRR5, SWD2, CFT2/YDH1, YTH1, CFT1/YHH1, FIP1 and PAP1. Interacts with FIP1, PFS2, RNA14 and YTH1. Requires Zn(2+) as cofactor.

It is found in the nucleus. Component of the cleavage and polyadenylation factor (CPF) complex, which plays a key role in polyadenylation-dependent pre-mRNA 3'-end formation and cooperates with cleavage factors including the CFIA complex and NAB4/CFIB. Has endonuclease activity. This Saccharomyces cerevisiae (strain ATCC 204508 / S288c) (Baker's yeast) protein is Endoribonuclease YSH1 (YSH1).